The following is a 246-amino-acid chain: Sugar fermentation stimulation protein homolog (246 aa).

It belongs to the SfsA family.

This is Sugar fermentation stimulation protein homolog from Prochlorococcus marinus (strain MIT 9301).